Consider the following 357-residue polypeptide: MSRTGYTLPVFAAAAARAALLHLIEKVPCASVQLDLLGEQAAIPIEQVARLDAETALGVTRSDPGDNLDLTRHTPVWAWVHLEVGTGEVLRLEAGEGLGRTAAGEAAIYRYARQLMEANVAPLVPTGRTATVRFILPEGRALALRTSNAAFGILEGLALLGTSGLSQPLSAADHLESFRAALRERAERERRLVFCIGAGGLQAAGRLGLDQGATVQTGNWIGALLVEAGMLGIESVLLLGYQGKLVKLAAGIFNTSSHVADGRLETIAAGAVAAGADIETVRTVLEAPTADAACALLAAAGWAEKIYAALAERVSGRSVEYVRKYTERTMAVATMLLDRQGRVIARDRAAAEWLAEP.

This sequence belongs to the CbiD family.

It carries out the reaction Co-precorrin-5B + S-adenosyl-L-methionine = Co-precorrin-6A + S-adenosyl-L-homocysteine. It participates in cofactor biosynthesis; adenosylcobalamin biosynthesis; cob(II)yrinate a,c-diamide from sirohydrochlorin (anaerobic route): step 6/10. Functionally, catalyzes the methylation of C-1 in cobalt-precorrin-5B to form cobalt-precorrin-6A. The chain is Cobalt-precorrin-5B C(1)-methyltransferase from Gloeobacter violaceus (strain ATCC 29082 / PCC 7421).